The following is a 188-amino-acid chain: ATP-dependent Clp protease proteolytic subunit 1 (188 aa).

Residue Ser90 is the Nucleophile of the active site. Residue His115 is part of the active site.

This sequence belongs to the peptidase S14 family. In terms of assembly, fourteen ClpP subunits assemble into 2 heptameric rings which stack back to back to give a disk-like structure with a central cavity, resembling the structure of eukaryotic proteasomes.

Its subcellular location is the cytoplasm. The catalysed reaction is Hydrolysis of proteins to small peptides in the presence of ATP and magnesium. alpha-casein is the usual test substrate. In the absence of ATP, only oligopeptides shorter than five residues are hydrolyzed (such as succinyl-Leu-Tyr-|-NHMec, and Leu-Tyr-Leu-|-Tyr-Trp, in which cleavage of the -Tyr-|-Leu- and -Tyr-|-Trp bonds also occurs).. Its function is as follows. Cleaves peptides in various proteins in a process that requires ATP hydrolysis. Has a chymotrypsin-like activity. Plays a major role in the degradation of misfolded proteins. This is ATP-dependent Clp protease proteolytic subunit 1 from Corynebacterium jeikeium (strain K411).